Consider the following 42-residue polypeptide: Lanthionine-containing peptide SapB precursor RamS (42 aa).

Positions 1 to 21 (MNLFDLQSMETPKEEAMGDVE) are excised as a propeptide. The segment at 1-21 (MNLFDLQSMETPKEEAMGDVE) is disordered. 2 consecutive cross-links (lanthionine (Ser-Cys)) follow at residues 24 to 31 (SRASLLLC) and 34 to 41 (SSLSITTC). 2 positions are modified to 2,3-didehydroalanine (Ser): Ser-27 and Ser-37.

The protein belongs to the lanthionine-containing morphogen family. In terms of processing, maturation involves the enzymatic conversion of Ser into dehydrated AA and the formation of thioether bonds with cysteine, probably by RamC. This is followed by membrane translocation and cleavage of the modified precursor. The RamS precursor protein (detected by an anti-propeptide antibody and by a C-terminal His-tag) is detected from at least 16 hours post-germination; its apparent molecular weight decreases starting from about 34 hours, when its probable modifying enzyme ramC is transcribed. Surfactin, a B.subtilis cyclic lipopeptide antibiotic which prevents aerial hyphae formation in S.coelicolor, decreases localization of RamS precursor protein to the cell membrane, suggesting that processing only occurs at the cell membrane.

It localises to the cell membrane. The protein resides in the secreted. The protein localises to the spore wall. In terms of biological role, stably accumulated precursor of SapB. Its function is as follows. Lanthionine-containing peptide devoid of antibiotic properties. A surface active peptide involved in the efficient formation of aerial mycelium when cells are grown in rich media. Has an overlapping function with the surface-active chaplin proteins; chaplins are essential on minimal medium while on rich medium both chaplins and SapB are required for efficient aerial hyphae formation. Required under conditions of high osmolarity where it may change the physical properties of the chaplin layer to allow hyphae to grow into air. Suggested to self-assemble at air-water interfaces, thus providing a film of surfactant through which nascent aerial hyphae can emerge; the aerial hyphae differentiate further into spores. Application to bald mutants (bld, unable to make aerial hyphae) restores hyphae growth. Application to chaplin negative mutants as well as ramC-ramS-ramA-ramB and ramR deletions also restores aerial hyphae growth and sporulation. Reduces surface tension of water from 72 to 30 mJ/m(2). This Streptomyces coelicolor (strain ATCC BAA-471 / A3(2) / M145) protein is Lanthionine-containing peptide SapB precursor RamS (ramS).